Here is a 346-residue protein sequence, read N- to C-terminus: Phosphoribosylformylglycinamidine cyclo-ligase (346 aa).

This sequence belongs to the AIR synthase family.

It localises to the cytoplasm. It catalyses the reaction 2-formamido-N(1)-(5-O-phospho-beta-D-ribosyl)acetamidine + ATP = 5-amino-1-(5-phospho-beta-D-ribosyl)imidazole + ADP + phosphate + H(+). It functions in the pathway purine metabolism; IMP biosynthesis via de novo pathway; 5-amino-1-(5-phospho-D-ribosyl)imidazole from N(2)-formyl-N(1)-(5-phospho-D-ribosyl)glycinamide: step 2/2. The chain is Phosphoribosylformylglycinamidine cyclo-ligase from Bacillus licheniformis (strain ATCC 14580 / DSM 13 / JCM 2505 / CCUG 7422 / NBRC 12200 / NCIMB 9375 / NCTC 10341 / NRRL NRS-1264 / Gibson 46).